The chain runs to 374 residues: Formylglycine-generating enzyme (374 aa).

An N-terminal signal peptide occupies residues 1–33; it reads MAAPALGPARGCGAELTLVLLLSLFLLLGWAAG. C50 and C52 are joined by a disulfide. Positions 57-102 are disordered; the sequence is RPGAQGSSAAAHRYSREANAPGSVPGGRPSPPTKMVPIPAGVFTMG. E130 is a Ca(2+) binding site. A glycan (N-linked (GlcNAc...) asparagine) is linked at N141. Cystine bridges form between C218-C365 and C235-C346. 8 residues coordinate Ca(2+): N259, I260, D273, F275, N293, G296, A298, and E300. C336 and C341 together coordinate Cu(2+). An interaction with sulfatases region spans residues 341 to 360; the sequence is CYRYRCAARSQNTPDSSASN.

It belongs to the sulfatase-modifying factor family. In terms of assembly, monomer, homodimer and heterodimer with SUMF2. Requires Cu(2+) as cofactor. N-glycosylated. Contains high-mannose-type oligosaccharides.

It localises to the endoplasmic reticulum lumen. It carries out the reaction L-cysteinyl-[sulfatase] + 2 a thiol + O2 = an organic disulfide + 3-oxo-L-alanyl-[sulfatase] + hydrogen sulfide + H2O + H(+). Its pathway is protein modification; sulfatase oxidation. Its function is as follows. Oxidase that catalyzes the conversion of cysteine to 3-oxoalanine on target proteins, using molecular oxygen and an unidentified reducing agent. 3-oxoalanine modification, which is also named formylglycine (fGly), occurs in the maturation of arylsulfatases and some alkaline phosphatases that use the hydrated form of 3-oxoalanine as a catalytic nucleophile. Known substrates include GALNS, ARSA, STS and ARSE. The chain is Formylglycine-generating enzyme from Bos taurus (Bovine).